Reading from the N-terminus, the 704-residue chain is Elongation factor G (704 aa).

The tr-type G domain maps to 8–290 (EKYRNIGICA…GVVRYLPAPN (283 aa)). Residues 17-24 (AHVDAGKT), 88-92 (DTPGH), and 142-145 (NKMD) contribute to the GTP site.

The protein belongs to the TRAFAC class translation factor GTPase superfamily. Classic translation factor GTPase family. EF-G/EF-2 subfamily.

The protein localises to the cytoplasm. Catalyzes the GTP-dependent ribosomal translocation step during translation elongation. During this step, the ribosome changes from the pre-translocational (PRE) to the post-translocational (POST) state as the newly formed A-site-bound peptidyl-tRNA and P-site-bound deacylated tRNA move to the P and E sites, respectively. Catalyzes the coordinated movement of the two tRNA molecules, the mRNA and conformational changes in the ribosome. This chain is Elongation factor G, found in Francisella tularensis subsp. holarctica (strain FTNF002-00 / FTA).